The chain runs to 193 residues: MRALVDAIRAQGTVLPGGILKVDGLINHQLLPQLTREMGETFARSFGPLKPTKVVTIEVSGIAPALATSMVLGVPMVYARKKRPVTMQGPVYTAQSVSRTKGGVVELFVSHEYLSADDRVVVIDDFLASGGTLLALAGMIRESGAQLLGMGCVVEKAFENGRANLASLGVPVRTLANIVRMDEGGTLVVEAGH.

Positions 20 and 27 each coordinate xanthine. Residue alanine 128–threonine 132 participates in 5-phospho-alpha-D-ribose 1-diphosphate binding. Xanthine is bound at residue lysine 156.

Belongs to the purine/pyrimidine phosphoribosyltransferase family. Xpt subfamily. Homodimer.

Its subcellular location is the cytoplasm. It catalyses the reaction XMP + diphosphate = xanthine + 5-phospho-alpha-D-ribose 1-diphosphate. The protein operates within purine metabolism; XMP biosynthesis via salvage pathway; XMP from xanthine: step 1/1. In terms of biological role, converts the preformed base xanthine, a product of nucleic acid breakdown, to xanthosine 5'-monophosphate (XMP), so it can be reused for RNA or DNA synthesis. This is Xanthine phosphoribosyltransferase from Deinococcus deserti (strain DSM 17065 / CIP 109153 / LMG 22923 / VCD115).